Here is a 1063-residue protein sequence, read N- to C-terminus: MASTTPITMEDLQKALEAQSRALRAELAAGASQSRRPRPPRQRDSSTSGDDSGRDSGGPRRRRGNRGRGQLRDWSRAPPPPEERQESRSQTPAPKPSRAPPQQPQPPRMQTGRGGSAPRPELGPPTNPFQAAVARGLRPPLHDPDTEAPTEACVTSWLWSEGEGAVFYRVDLHFTNLGTPPLDEDGRWDPALMYNPCGPEPPAHVVRAYNQPAGDVRGVWGKGERTYAEQDFRVGGTRWHRLLRMPVRGLDGDSAPLPPHTTERIETRSARHPWRIRFGAPQAFLAGLLLAAVAVGTARAGLQPRADMAAPPTLPQPPRAHGQHYGHHHHQLPFLGHDGHHGGTLRVGQHHRNASDVLPGHWLQGGWGCYNLSDWHQGTHVCHTKHMDFWCVEHDRPPPATPTPFTTAANSTTAATPATAPAPCHAGLNDSCGGFLSGCGPMRLRHGADTRCGRLICGLSTTAQYPPTRFGCAMRWGLPPWELVVLTARPEDGWTCRGVPAHPGTRCPELVSPMGRATCSPASALWLATANALSLDHALAAFVLLVPWVLIFMVCRRACRRRGAAAALTAVVLQGYNPPAYGEEAFTYLCTAPGCATQTPVPVRLAGVRFESKIVDGGCFAPWDLEATGACICEIPTDVSCEGLGAWVPTAPCARIWNGTQRACTFWAVNAYSSGGYAQLASYFNPGGSYYKQYHPTACEVEPAFGHSDAACWGFPTDTVMSVFALASYVQHPHKTVRVKFHTETRTVWQLSVAGASCNVTTEHPFCNTPHGQLEVQVPPDPGDLVEYIMNYTGNQQSRWGLGSPNCHGPDWASPVCQRHSPDCSRLVGATPERPRLRLVDADDPLLRTAPGPGEVWVTPVIGSQARKCGLHIRAGPYGHATVEMPEWIRAHTTSDPWHPPGPLGLKFKTVRPVALPRALAPPRNVRVTGCYQCGTPALVEGLAPGGGNCHLTLNGEDVGAFPPGKFVTAALLNTPPPYQVSCGGESDRASARVIDPAAQSFTGVVYGTHTTAVSETRQTWAEWAAAHWWQLTLGAICALLLAGLLACCAKCLYYLRGAIAPR.

The tract at residues Met1–Ala131 is disordered. The segment at Gly30–Gly69 is human C1QBP/SF2P32-binding. Ser46 carries the phosphoserine; by host modification. The span at Gln70 to Ser87 shows a compositional bias: basic and acidic residues. Pro residues predominate over residues Ala93–Pro107. An intrachain disulfide couples Cys153 to Cys197. The segment at Gly279–Ala300 is functions as E2 signal peptide. Residues Gly301–Ser534 lie on the Extracellular side of the membrane. 4 N-linked (GlcNAc...) asparagine; by host glycosylation sites follow: Asn353, Asn371, Asn410, and Asn429. A helical transmembrane segment spans residues Leu535–Cys555. The Cytoplasmic portion of the chain corresponds to Arg556–Gly582. A functions as E1 signal peptide region spans residues Gly563–Gly582. Residues Glu583–His1028 lie on the Extracellular side of the membrane. 8 disulfide bridges follow: Cys590–Cys595, Cys619–Cys824, Cys641–Cys653, Cys699–Cys712, Cys758–Cys767, Cys807–Cys817, Cys931–Cys934, and Cys950–Cys983. The N-linked (GlcNAc...) asparagine; by host glycan is linked to Asn658. 2 residues coordinate Ca(2+): Asn670 and Ala671. 2 residues coordinate Ca(2+): Asp718 and Thr719. N-linked (GlcNAc...) asparagine; by host glycans are attached at residues Asn759 and Asn791. O-linked (GalNAc...) threonine; by host glycosylation is found at Thr1011 and Thr1012. Residues Trp1029–Cys1049 form a helical membrane-spanning segment. Over Ala1050–Arg1063 the chain is Extracellular.

In terms of assembly, homodimer; further assembles into homooligomer. Interacts with human C1QBP. Interacts (via N-terminus) with protease/methyltransferase p150. As to quaternary structure, heterodimer with spike glycoprotein E2. Heterodimer with spike glycoprotein E1. In terms of processing, structural polyprotein: Specific enzymatic cleavages in vivo yield mature proteins. Two signal peptidase-mediated cleavages within the polyprotein produce the structural proteins capsid, E2, and E1. The E2 signal peptide remains attached to the C-terminus of the capsid protein after cleavage by the signal peptidase. Another signal peptide at E2 C-terminus directs E1 to the ER, with a similar mechanism. Post-translationally, contains three N-linked oligosaccharides. Capsid is phosphorylated on Ser-46 by host. This phosphorylation negatively regulates capsid protein RNA-binding activity. Dephosphorylated by human PP1A.

The protein resides in the virion. Its subcellular location is the host cytoplasm. It localises to the host mitochondrion. The protein localises to the virion membrane. It is found in the host Golgi apparatus membrane. Capsid protein interacts with genomic RNA and assembles into icosahedric core particles 65-70 nm in diameter. The resulting nucleocapsid eventually associates with the cytoplasmic domain of E2 at the cell membrane, leading to budding and formation of mature virions from host Golgi membranes. Phosphorylation negatively regulates RNA-binding activity, possibly delaying virion assembly during the viral replication phase. Capsid protein dimerizes and becomes disulfide-linked in the virion. Modulates genomic RNA replication. Modulates subgenomic RNA synthesis by interacting with human C1QBP/SF2P32. Induces both perinuclear clustering of mitochondria and the formation of electron-dense intermitochondrial plaques, both hallmarks of rubella virus infected cells. Induces apoptosis when expressed in transfected cells. In terms of biological role, responsible for viral attachment to target host cell, by binding to the cell receptor. Its transport to the plasma membrane depends on interaction with E1 protein. The surface glycoproteins display an irregular helical organization and a pseudo-tetrameric inner nucleocapsid arrangement. Functionally, class II viral fusion protein. Fusion activity is inactive as long as E1 is bound to E2 in mature virion. After virus attachment to target cell and clathrin-mediated endocytosis, acidification of the endosome would induce dissociation of E1/E2 heterodimer and concomitant trimerization of the E1 subunits. This E1 homotrimer is fusion active, and promotes release of viral nucleocapsid in cytoplasm after endosome and viral membrane fusion. The cytoplasmic tail of spike glycoprotein E1 modulates virus release. The surface glycoproteins display an irregular helical organization and a pseudo-tetrameric inner nucleocapsid arrangement. This is Structural polyprotein from Rubella virus (strain TO-336 vaccine) (RUBV).